The chain runs to 277 residues: 4-hydroxy-tetrahydrodipicolinate reductase (277 aa).

9-14 (GATGRM) provides a ligand contact to NAD(+). Lys37 is a binding site for NADP(+). 75–77 (GTS) contacts NAD(+). The Proton donor/acceptor role is filled by His132. The active-site Proton donor is the Lys136. 142–143 (GT) contributes to the (S)-2,3,4,5-tetrahydrodipicolinate binding site. Disordered stretches follow at residues 154-173 (ARGA…ARGQ) and 247-277 (ERAA…VTSA). A compositionally biased stretch (low complexity) spans 250-265 (AQAAAGDAPSGPVDDG).

It belongs to the DapB family.

It is found in the cytoplasm. The enzyme catalyses (S)-2,3,4,5-tetrahydrodipicolinate + NAD(+) + H2O = (2S,4S)-4-hydroxy-2,3,4,5-tetrahydrodipicolinate + NADH + H(+). It catalyses the reaction (S)-2,3,4,5-tetrahydrodipicolinate + NADP(+) + H2O = (2S,4S)-4-hydroxy-2,3,4,5-tetrahydrodipicolinate + NADPH + H(+). Its pathway is amino-acid biosynthesis; L-lysine biosynthesis via DAP pathway; (S)-tetrahydrodipicolinate from L-aspartate: step 4/4. Its function is as follows. Catalyzes the conversion of 4-hydroxy-tetrahydrodipicolinate (HTPA) to tetrahydrodipicolinate. The protein is 4-hydroxy-tetrahydrodipicolinate reductase of Clavibacter michiganensis subsp. michiganensis (strain NCPPB 382).